A 399-amino-acid polypeptide reads, in one-letter code: DNA polymerase IV (399 aa).

The UmuC domain occupies 5 to 187; the sequence is ILHCDLNNFY…LPVEALLYVG (183 aa). Residues D9 and D105 each contribute to the Mg(2+) site. E106 is an active-site residue.

This sequence belongs to the DNA polymerase type-Y family. Monomer. The cofactor is Mg(2+).

It is found in the cytoplasm. It carries out the reaction DNA(n) + a 2'-deoxyribonucleoside 5'-triphosphate = DNA(n+1) + diphosphate. Its function is as follows. Poorly processive, error-prone DNA polymerase involved in untargeted mutagenesis. Copies undamaged DNA at stalled replication forks, which arise in vivo from mismatched or misaligned primer ends. These misaligned primers can be extended by PolIV. Exhibits no 3'-5' exonuclease (proofreading) activity. May be involved in translesional synthesis, in conjunction with the beta clamp from PolIII. The sequence is that of DNA polymerase IV from Acetivibrio thermocellus (strain ATCC 27405 / DSM 1237 / JCM 9322 / NBRC 103400 / NCIMB 10682 / NRRL B-4536 / VPI 7372) (Clostridium thermocellum).